A 239-amino-acid chain; its full sequence is Orotidine 5'-phosphate decarboxylase (239 aa).

Substrate-binding positions include Asp11, Lys33, 60 to 69 (DLKCHDIPTT), Thr123, Arg185, Gln194, Gly214, and Arg215. Catalysis depends on Lys62, which acts as the Proton donor.

The protein belongs to the OMP decarboxylase family. Type 1 subfamily. Homodimer.

The enzyme catalyses orotidine 5'-phosphate + H(+) = UMP + CO2. The protein operates within pyrimidine metabolism; UMP biosynthesis via de novo pathway; UMP from orotate: step 2/2. Catalyzes the decarboxylation of orotidine 5'-monophosphate (OMP) to uridine 5'-monophosphate (UMP). The sequence is that of Orotidine 5'-phosphate decarboxylase from Bacillus licheniformis (strain ATCC 14580 / DSM 13 / JCM 2505 / CCUG 7422 / NBRC 12200 / NCIMB 9375 / NCTC 10341 / NRRL NRS-1264 / Gibson 46).